A 1233-amino-acid polypeptide reads, in one-letter code: Structural maintenance of chromosomes protein 1A (1233 aa).

32 to 39 (GPNGSGKS) contributes to the ATP binding site. Coiled coils occupy residues 104-124 (EYKI…LEKL) and 163-503 (ELAQ…KAEI). Positions 284 to 293 (IKEKDSELNQ) are enriched in basic and acidic residues. 2 disordered regions span residues 284 to 308 (IKEK…TSHK) and 348 to 369 (QEFE…TLEE). Phosphoserine is present on residues Ser-358 and Ser-360. Positions 515–629 (VYGRLIDLCQ…DNVEDARRIA (115 aa)) constitute an SMC hinge domain. N6-acetyllysine is present on residues Lys-648 and Lys-713. A coiled-coil region spans residues 667-935 (DEKAVDKLKE…RHNLLQACKM (269 aa)). Residues 947–969 (MDDISQEEGSSQGEESVSGSQRT) form a disordered region. The span at 953-967 (EEGSSQGEESVSGSQ) shows a compositional bias: low complexity. Ser-957, Ser-962, Ser-966, and Ser-970 each carry phosphoserine. A coiled-coil region spans residues 988–1068 (EDLKDAQAEE…FEQIKKERFD (81 aa)). Lys-1037 carries the N6-acetyllysine modification.

The protein belongs to the SMC family. SMC1 subfamily. As to quaternary structure, forms a heterodimer with SMC3 in cohesin complexes. Cohesin complexes are composed of the SMC1 (SMC1A or SMC1B) and SMC3 heterodimer attached via their SMC hinge domain, RAD21 which link them, and one STAG protein (STAG1, STAG2 or STAG3), which interacts with RAD21. In germ cell cohesin complexes, SMC1A is mutually exclusive with SMC1B. Interacts with STAG3. Found in a complex with CDCA5, SMC3 and RAD21, PDS5A/SCC-112 and PDS5B/APRIN. Found in a complex containing POLE and SMC3. Interacts with BRCA1, SYCP2, NDC80, RPGR and BRAT1. The cohesin complex interacts with the cohesin loading complex subunits NIPBL/Scc2 (via HEAT repeats) and MAU2/Scc4. NIPBL directly contacts all members of the complex, RAD21, SMC1A/B, SMC3 and STAG1. In terms of processing, phosphorylated upon ionizing radiation or DNA methylation. Phosphorylation of Ser-957 and Ser-966 activates it and is required for S-phase checkpoint activation. Ubiquitinated by the DCX(DCAF15) complex, leading to its degradation. As to expression, ubiquitous (at protein level).

Its subcellular location is the nucleus. The protein localises to the chromosome. It localises to the centromere. Its function is as follows. Involved in chromosome cohesion during cell cycle and in DNA repair. Involved in DNA repair via its interaction with BRCA1 and its related phosphorylation by ATM, and works as a downstream effector in the ATM/NBS1 branch of S-phase checkpoint. Central component of cohesin complex. The cohesin complex is required for the cohesion of sister chromatids after DNA replication. The cohesin complex apparently forms a large proteinaceous ring within which sister chromatids can be trapped. At anaphase, the complex is cleaved and dissociates from chromatin, allowing sister chromatids to segregate. The cohesin complex may also play a role in spindle pole assembly during mitosis. Involved in DNA repair via its interaction with BRCA1 and its related phosphorylation by ATM, or via its phosphorylation by ATR. Works as a downstream effector both in the ATM/NBS1 branch and in the ATR/MSH2 branch of S-phase checkpoint. The chain is Structural maintenance of chromosomes protein 1A (Smc1a) from Mus musculus (Mouse).